The chain runs to 614 residues: Vitamin B12 transporter BtuB (614 aa).

The first 20 residues, 1–20 (MIKKASLLTACSVTAFSAWA), serve as a signal peptide directing secretion. The TonB box signature appears at 26 to 33 (DTLVVTAN). One can recognise a TBDR plug domain in the interval 38-152 (PRSTVLAPTT…IGGVVNIITT (115 aa)). Cyanocob(III)alamin-binding positions include Leu-83, Ser-85, Asn-92, and 110–111 (VS). Positions 155–614 (EPGTEISAGW…EYTLSGSYTF (460 aa)) constitute a TBDR beta-barrel domain. 3 beta stranded membrane-spanning segments follow: residues 158 to 165 (TEISAGWG), 169 to 178 (YQNYDVSTQQ), and 184 to 195 (TRVTLLGDYAHT). Ca(2+)-binding residues include Asp-199, Gln-211, Asp-213, and Asp-215. Beta stranded transmembrane passes span 217–227 (FLSKTLYGALE) and 232–248 (DAWS…NRTN). Positions 249 and 250 each coordinate Ca(2+). Ala-251 is a cyanocob(III)alamin binding site. Position 261 (Asp-261) interacts with Ca(2+). 14 beta stranded membrane passes run 263 to 277 (RKLY…LRYN), 279 to 296 (ELIK…KDYN), 309 to 325 (TLDE…NNII), 328 to 337 (HGNVGAGVDW), 353 to 369 (YDQR…QQVG), 371 to 381 (FTFEGAARSDD), 385 to 400 (FGRH…WEFI), 403 to 417 (YRFI…KAPN), 434 to 443 (KSKQWEGAFE), 449 to 458 (VNWRISGYRN), 473 to 490 (YYNE…TANF), 494 to 509 (PLTH…ARNA), 517 to 529 (RRAK…QLDW), and 535 to 550 (DWGI…YDKD). Position 309 (Thr-309) interacts with cyanocob(III)alamin. Arg-517 provides a ligand contact to cyanocob(III)alamin. Position 551 (Tyr-551) interacts with cyanocob(III)alamin. Transmembrane regions (beta stranded) follow at residues 558 to 572 (TVKM…LAVA), 585 to 596 (IANLFDKDYETV), and 602 to 614 (AGRE…SYTF). The TonB C-terminal box motif lies at 597–614 (YGYQTAGREYTLSGSYTF).

Belongs to the TonB-dependent receptor family. BtuB (TC 1.B.14.3.1) subfamily.

Its subcellular location is the cell outer membrane. In terms of biological role, involved in the active translocation of vitamin B12 (cyanocobalamin) across the outer membrane to the periplasmic space. It derives its energy for transport by interacting with the trans-periplasmic membrane protein TonB. This Shigella dysenteriae serotype 1 (strain Sd197) protein is Vitamin B12 transporter BtuB.